A 426-amino-acid polypeptide reads, in one-letter code: 3-phosphoshikimate 1-carboxyvinyltransferase (426 aa).

3 residues coordinate 3-phosphoshikimate: K22, S23, and R27. A phosphoenolpyruvate-binding site is contributed by K22. Residues G96 and R124 each coordinate phosphoenolpyruvate. S170, S171, Q172, S198, D314, N337, and K341 together coordinate 3-phosphoshikimate. Q172 contacts phosphoenolpyruvate. D314 functions as the Proton acceptor in the catalytic mechanism. Residues R345, R387, and K412 each coordinate phosphoenolpyruvate.

This sequence belongs to the EPSP synthase family. Monomer.

It localises to the cytoplasm. It catalyses the reaction 3-phosphoshikimate + phosphoenolpyruvate = 5-O-(1-carboxyvinyl)-3-phosphoshikimate + phosphate. Its pathway is metabolic intermediate biosynthesis; chorismate biosynthesis; chorismate from D-erythrose 4-phosphate and phosphoenolpyruvate: step 6/7. In terms of biological role, catalyzes the transfer of the enolpyruvyl moiety of phosphoenolpyruvate (PEP) to the 5-hydroxyl of shikimate-3-phosphate (S3P) to produce enolpyruvyl shikimate-3-phosphate and inorganic phosphate. The polypeptide is 3-phosphoshikimate 1-carboxyvinyltransferase (Aliivibrio fischeri (strain MJ11) (Vibrio fischeri)).